The primary structure comprises 927 residues: Protein unc-45 homolog B (927 aa).

3 TPR repeats span residues 4-37 (PVQLKEEGNKYFQSNEYGQAIQCYSKALKLITDK), 41-74 (AVLYRNRSACYLKQDNYVQAAADASKAIDVDASD), and 76-108 (KALFRRCQALEKLGKLDQAYKDVQRCATLEPKN). ARM repeat units follow at residues 167-206 (DAGAEQIFQNNGVNLLMQLIESKDPEMILSAIRTLSGMCT), 209-248 (RARATAIVHLVGINKICSIMAVDNEEIALAACNLLQNIVD), and 746-785 (DKLRQKIIKEKALPEIENYMFENHEQIRQAATECMCNLAL).

As to expression, detected initially throughout the somites and the heart and gradually also expressed in the jaw, branchial arches and body wall muscles at later embryonic stages.

It is found in the cytoplasm. Its subcellular location is the myofibril. It localises to the sarcomere. The protein resides in the z line. The protein localises to the a band. It is found in the perinuclear region. Its subcellular location is the cytosol. Its function is as follows. Acts as a co-chaperone for HSP90 and is required for proper folding of the myosin motor domain. Plays a role in sarcomere formation during muscle cell development. Is necessary for normal early lens development. The protein is Protein unc-45 homolog B of Xenopus tropicalis (Western clawed frog).